We begin with the raw amino-acid sequence, 121 residues long: Ribosome-binding factor A (121 aa).

The protein belongs to the RbfA family. In terms of assembly, monomer. Binds 30S ribosomal subunits, but not 50S ribosomal subunits or 70S ribosomes.

The protein localises to the cytoplasm. Functionally, one of several proteins that assist in the late maturation steps of the functional core of the 30S ribosomal subunit. Associates with free 30S ribosomal subunits (but not with 30S subunits that are part of 70S ribosomes or polysomes). Required for efficient processing of 16S rRNA. May interact with the 5'-terminal helix region of 16S rRNA. The chain is Ribosome-binding factor A from Paraburkholderia xenovorans (strain LB400).